Reading from the N-terminus, the 337-residue chain is tRNA N6-adenosine threonylcarbamoyltransferase (337 aa).

2 residues coordinate Fe cation: His-114 and His-118. Substrate is bound by residues 136 to 140 (LVSGG), Asp-169, Gly-182, Asp-186, and Asn-275. Position 301 (Asp-301) interacts with Fe cation.

The protein belongs to the KAE1 / TsaD family. Fe(2+) is required as a cofactor.

It localises to the cytoplasm. It catalyses the reaction L-threonylcarbamoyladenylate + adenosine(37) in tRNA = N(6)-L-threonylcarbamoyladenosine(37) in tRNA + AMP + H(+). Required for the formation of a threonylcarbamoyl group on adenosine at position 37 (t(6)A37) in tRNAs that read codons beginning with adenine. Is involved in the transfer of the threonylcarbamoyl moiety of threonylcarbamoyl-AMP (TC-AMP) to the N6 group of A37, together with TsaE and TsaB. TsaD likely plays a direct catalytic role in this reaction. This is tRNA N6-adenosine threonylcarbamoyltransferase from Streptococcus thermophilus (strain CNRZ 1066).